The primary structure comprises 582 residues: Aspartate--tRNA ligase (582 aa).

Glutamate 174 contacts L-aspartate. The aspartate stretch occupies residues glutamine 198–lysine 201. Residue arginine 220 coordinates L-aspartate. ATP is bound by residues arginine 220 to glutamate 222 and glutamine 229. Histidine 443 is an L-aspartate binding site. Glutamate 477 is a binding site for ATP. Position 484 (arginine 484) interacts with L-aspartate. ATP is bound at residue glycine 529 to arginine 532.

Belongs to the class-II aminoacyl-tRNA synthetase family. Type 1 subfamily. Homodimer.

The protein localises to the cytoplasm. The catalysed reaction is tRNA(Asp) + L-aspartate + ATP = L-aspartyl-tRNA(Asp) + AMP + diphosphate. Functionally, catalyzes the attachment of L-aspartate to tRNA(Asp) in a two-step reaction: L-aspartate is first activated by ATP to form Asp-AMP and then transferred to the acceptor end of tRNA(Asp). The sequence is that of Aspartate--tRNA ligase from Streptococcus equi subsp. zooepidemicus (strain MGCS10565).